A 422-amino-acid polypeptide reads, in one-letter code: Metallocarboxypeptidase A (422 aa).

The N-terminal stretch at 1-17 is a signal peptide; it reads MRSVLSLALLAANVVTA. Positions 18–112 are cleaved as a propeptide — activation peptide; the sequence is AVVSPFDYSG…FEAYSAGYAP (95 aa). The Peptidase M14 domain occupies 119-419; it reads SYHSYQDHLS…AGTVAMLKAV (301 aa). Zn(2+)-binding residues include His-179 and Glu-182. Substrate-binding positions include 179-182, Arg-237, and 254-255; these read HARE and NR. Residues Cys-248 and Cys-271 are joined by a disulfide bond. Residue His-309 coordinates Zn(2+). Position 310 to 311 (310 to 311) interacts with substrate; that stretch reads SY. Glu-385 functions as the Proton donor/acceptor in the catalytic mechanism.

The protein belongs to the peptidase M14 family. Zn(2+) serves as cofactor.

Its subcellular location is the secreted. Extracellular metalloprotease that contributes to pathogenicity. The sequence is that of Metallocarboxypeptidase A (MCPA) from Trichophyton rubrum (Athlete's foot fungus).